Here is a 211-residue protein sequence, read N- to C-terminus: Redox-sensing transcriptional repressor Rex (211 aa).

The H-T-H motif DNA-binding region spans 17–56; sequence LYYRFIQNFAQEGMERISSKELSEAMKIDSATIRRDFSYF. 91 to 96 is a binding site for NAD(+); the sequence is GVGNLG.

This sequence belongs to the transcriptional regulatory Rex family. In terms of assembly, homodimer.

It is found in the cytoplasm. Its function is as follows. Modulates transcription in response to changes in cellular NADH/NAD(+) redox state. This is Redox-sensing transcriptional repressor Rex from Lysinibacillus sphaericus (strain C3-41).